The primary structure comprises 339 residues: Ketol-acid reductoisomerase (NADP(+)) (339 aa).

Positions Met1–Thr182 constitute a KARI N-terminal Rossmann domain. Residues Tyr24–Gln27, Lys48, Ser51, Thr53, and Asp83–Gln86 each bind NADP(+). His108 is a catalytic residue. Gly134 contributes to the NADP(+) binding site. The 146-residue stretch at Thr183–Ile328 folds into the KARI C-terminal knotted domain. Positions 191, 195, 227, and 231 each coordinate Mg(2+). Residue Ser252 coordinates substrate.

It belongs to the ketol-acid reductoisomerase family. It depends on Mg(2+) as a cofactor.

The enzyme catalyses (2R)-2,3-dihydroxy-3-methylbutanoate + NADP(+) = (2S)-2-acetolactate + NADPH + H(+). It catalyses the reaction (2R,3R)-2,3-dihydroxy-3-methylpentanoate + NADP(+) = (S)-2-ethyl-2-hydroxy-3-oxobutanoate + NADPH + H(+). It functions in the pathway amino-acid biosynthesis; L-isoleucine biosynthesis; L-isoleucine from 2-oxobutanoate: step 2/4. The protein operates within amino-acid biosynthesis; L-valine biosynthesis; L-valine from pyruvate: step 2/4. Its function is as follows. Involved in the biosynthesis of branched-chain amino acids (BCAA). Catalyzes an alkyl-migration followed by a ketol-acid reduction of (S)-2-acetolactate (S2AL) to yield (R)-2,3-dihydroxy-isovalerate. In the isomerase reaction, S2AL is rearranged via a Mg-dependent methyl migration to produce 3-hydroxy-3-methyl-2-ketobutyrate (HMKB). In the reductase reaction, this 2-ketoacid undergoes a metal-dependent reduction by NADPH to yield (R)-2,3-dihydroxy-isovalerate. This chain is Ketol-acid reductoisomerase (NADP(+)), found in Allorhizobium ampelinum (strain ATCC BAA-846 / DSM 112012 / S4) (Agrobacterium vitis (strain S4)).